A 415-amino-acid chain; its full sequence is Acetyl-CoA acetyltransferase 1 (415 aa).

Residue cysteine 99 is the Acyl-thioester intermediate of the active site. Lysine 239 serves as a coordination point for CoA. Residue alanine 256 coordinates K(+). Serine 260 serves as a coordination point for CoA. K(+) is bound at residue valine 357. Residues histidine 361 and cysteine 391 each act as proton acceptor in the active site.

Belongs to the thiolase-like superfamily. Thiolase family. As to expression, expressed in the vascular system of roots, cotyledons, young leaves, fully expanded leaves, stems, flowers, and funiculi of siliques.

The protein resides in the cytoplasm. It is found in the peroxisome. It carries out the reaction 2 acetyl-CoA = acetoacetyl-CoA + CoA. The protein operates within metabolic intermediate biosynthesis; (R)-mevalonate biosynthesis; (R)-mevalonate from acetyl-CoA: step 1/3. Functionally, catalyzes the condensation of two molecules of acetyl-CoA to produce acetoacetyl-CoA. This chain is Acetyl-CoA acetyltransferase 1, found in Arabidopsis thaliana (Mouse-ear cress).